The sequence spans 545 residues: Chaperonin GroEL (545 aa).

ATP is bound by residues 30–33 (TLGP), Lys-51, 87–91 (DGTTT), Gly-415, 479–481 (NAA), and Asp-495.

Belongs to the chaperonin (HSP60) family. In terms of assembly, forms a cylinder of 14 subunits composed of two heptameric rings stacked back-to-back. Interacts with the co-chaperonin GroES.

It localises to the cytoplasm. It carries out the reaction ATP + H2O + a folded polypeptide = ADP + phosphate + an unfolded polypeptide.. Together with its co-chaperonin GroES, plays an essential role in assisting protein folding. The GroEL-GroES system forms a nano-cage that allows encapsulation of the non-native substrate proteins and provides a physical environment optimized to promote and accelerate protein folding. The sequence is that of Chaperonin GroEL from Cellvibrio japonicus (strain Ueda107) (Pseudomonas fluorescens subsp. cellulosa).